The sequence spans 310 residues: Ribosome production factor 2 homolog (310 aa).

A Brix domain is found at 29–239; it reads KKTLILHGTK…VRRHRYPVES (211 aa). The interval 281–310 is disordered; it reads LSNDVKGLKRERREAKKNKDHSKKQKINPE. Basic residues predominate over residues 295–310; it reads AKKNKDHSKKQKINPE.

It belongs to the RPF2 family.

The protein resides in the nucleus. Its subcellular location is the nucleolus. The protein is Ribosome production factor 2 homolog of Oryza sativa subsp. japonica (Rice).